A 366-amino-acid chain; its full sequence is PTI1-like tyrosine-protein kinase 2 (366 aa).

Over residues 8–23 (GDKKGDSDLSNEEVHL) the composition is skewed to basic and acidic residues. The disordered stretch occupies residues 8–50 (GDKKGDSDLSNEEVHLKSPWQNSEANQKNQKPQAVVKPEAQKE). Polar residues predominate over residues 26 to 39 (PWQNSEANQKNQKP). In terms of domain architecture, Protein kinase spans 71–353 (FGSKSLIGEG…IVVKALQPLL (283 aa)). ATP contacts are provided by residues 77 to 85 (IGEGSYGRV) and K99. The active-site Proton acceptor is the D203.

The protein belongs to the protein kinase superfamily. Tyr protein kinase family. As to quaternary structure, interacts with OXI1. Autophosphorylated and phosphorylated by OXI1.

The catalysed reaction is L-tyrosyl-[protein] + ATP = O-phospho-L-tyrosyl-[protein] + ADP + H(+). Its activity is regulated as follows. Strongly activated in response to phosphatidic acid (PA) and xylanase in a OXI1- and PDK1-dependent manner, and, to a lesser extent, by hydrogen peroxide and flagellin in a OXI1-dependent manner. Its function is as follows. Probable tyrosine-protein kinase involved in oxidative burst-mediated signaling leading to specific genes expression. This is PTI1-like tyrosine-protein kinase 2 (PTI12) from Arabidopsis thaliana (Mouse-ear cress).